The following is a 488-amino-acid chain: Protein DETOXIFICATION 35 (488 aa).

The next 12 membrane-spanning stretches (helical) occupy residues 38–58, 73–93, 121–141, 150–170, 187–207, 218–238, 262–282, 296–316, 336–356, 379–401, 408–428, and 439–459; these read LWMI…VSSV, AVSI…LGMG, IILF…TPVL, IAVP…SLAF, IAWI…LFII, LAFN…VIGW, IASA…IVLT, SICM…NAAI, VYVT…AIII, AYLL…VAVG, VAYI…YLLG, and WSGM…VLYK.

Belongs to the multi antimicrobial extrusion (MATE) (TC 2.A.66.1) family. In terms of tissue distribution, highly expressed in inflorescence tissues, especially in floral epidermal guard cells including those of the anthers, stigma, siliques and nectaries. Also detected in the meristematic zone of the root apex and in the elongation zone through to the fully expanded cells of the differentiation zone.

It localises to the vacuole membrane. Its function is as follows. Multidrug and toxin efflux transporter involved in flavonoid metabolism. Required for proper reproductive development. This Arabidopsis thaliana (Mouse-ear cress) protein is Protein DETOXIFICATION 35.